We begin with the raw amino-acid sequence, 1507 residues long: Paired amphipathic helix protein sin-3 (1507 aa).

Disordered stretches follow at residues 1 to 26 (MYNP…TNNA), 228 to 286 (PLAL…PPRV), 397 to 450 (ELGS…MMEE), 543 to 569 (VDDV…DSSK), and 1349 to 1434 (IPRE…MDHL). Residues 16–26 (DQSQQQPTNNA) show a composition bias toward polar residues. Basic residues predominate over residues 270-279 (RQNRPGRRKK). A PAH domain is found at 282–352 (GPPRVDEALA…LGFNTFLPTG (71 aa)). The segment covering 427–438 (DGIDDEDDEESG) has biased composition (acidic residues). Basic and acidic residues-rich tracts occupy residues 439-450 (IEDKNNEEMMEE) and 555-568 (EIKK…KDSS). Composition is skewed to acidic residues over residues 1354–1365 (KDDDDDDDEEGN), 1373–1382 (NVKDEDDGGD), and 1389–1421 (PDDD…DEPE).

As to quaternary structure, component of the SIN3S complex, which contains at least sin-3, hda-1, athp-1 and mrg-1. Interacts with ztf-11; the interaction is weak. Interacts with cfp-1. Expressed in all ray structural cells including ray 6, 7, 8 and 9 of the male tail. Also expressed in the inner labial neurons, socket cells, the cephalic neurons in the head and the ventral nerve cord.

The protein localises to the nucleus. Functionally, probable transcriptional repressor required for the deposition of dimethylated 'Lys-9' of histone H3 (H3K9me2) on asynapsed chromosome pairs (both autosomes and sex chromosomes) during meiosis, but this does not seem to solely affect the transcriptional status. Plays a role in ray fusion and patterning in the male tail, and this may be through activity of the histone deacetylase complex (HDAC). The chain is Paired amphipathic helix protein sin-3 from Caenorhabditis elegans.